The chain runs to 407 residues: 1-deoxy-D-xylulose 5-phosphate reductoisomerase (407 aa).

NADPH-binding residues include Thr-25, Gly-26, Ser-27, Ile-28, Asn-53, and Asn-136. A 1-deoxy-D-xylulose 5-phosphate-binding site is contributed by Lys-137. Glu-138 provides a ligand contact to NADPH. Asp-162 lines the Mn(2+) pocket. Residues Ser-163, Glu-164, Ser-188, and His-211 each coordinate 1-deoxy-D-xylulose 5-phosphate. Residue Glu-164 coordinates Mn(2+). Gly-217 is an NADPH binding site. Residues Ser-224, Asn-229, Lys-230, and Glu-233 each coordinate 1-deoxy-D-xylulose 5-phosphate. Glu-233 is a Mn(2+) binding site.

The protein belongs to the DXR family. Mg(2+) serves as cofactor. It depends on Mn(2+) as a cofactor.

The catalysed reaction is 2-C-methyl-D-erythritol 4-phosphate + NADP(+) = 1-deoxy-D-xylulose 5-phosphate + NADPH + H(+). It functions in the pathway isoprenoid biosynthesis; isopentenyl diphosphate biosynthesis via DXP pathway; isopentenyl diphosphate from 1-deoxy-D-xylulose 5-phosphate: step 1/6. Functionally, catalyzes the NADPH-dependent rearrangement and reduction of 1-deoxy-D-xylulose-5-phosphate (DXP) to 2-C-methyl-D-erythritol 4-phosphate (MEP). The polypeptide is 1-deoxy-D-xylulose 5-phosphate reductoisomerase (Rhodopseudomonas palustris (strain BisA53)).